The following is a 392-amino-acid chain: Alpha-(1,3)-fucosyltransferase fut-6 (392 aa).

Topologically, residues 1–12 (MSQIGGATCTWR) are cytoplasmic. A helical; Signal-anchor for type II membrane protein transmembrane segment spans residues 13–35 (YLGRFVTLGIYASVALFVWYTLV). At 36 to 392 (PTRSKHKDSI…CNNQIASKYL (357 aa)) the chain is on the lumenal side. A glycan (N-linked (GlcNAc...) asparagine) is linked at Asn158.

Belongs to the glycosyltransferase 10 family. Unlike other alpha-(1,3)-fucosyltransferases, appears not to require a divalent metal cation as cofactor. serves as cofactor.

It is found in the golgi apparatus. The protein resides in the golgi stack membrane. It participates in protein modification; protein glycosylation. Its activity is regulated as follows. Inhibited by divalent metal cations. Functionally, involved in the fucosylation of N-glycans. Preferentially catalyzes the addition of fucose in alpha 1-3 linkage to the distal GlcNAc residue in N-glycans. Catalyzes the transfer of fucose to Gal-beta-1-4-GlcNAc-alpha-pNP (LN-pNP) and Gal-beta-1-4-GlcNAc-beta-1-3-Gal-beta-1-4-Glc (LNnT). Unlike alpha-(1,3)-fucosyltransferase fut-1, does not transfer fucose to Man-alpha-1-3-(Man-alpha-1-6)-Man-beta-1-4-GlcNAc-beta-1-4-GlcNAc-beta-1-Asn (M3), Man-alpha-1-3-(Man-alpha-1-6)-Man-beta-1-4-GlcNAc-beta-1-4-(Fuc-alpha-1-6)-GlcNAc-beta-1-Asn (M3F6) and GlcNAc-beta-1-2-Man-alpha-1-3-(GlcNAc-beta-1-2-Man-alpha-1-6)-Man-beta-1-4-GlcNAc-beta-1-4(Fuc-alpha-1-6)-GlcNAc-beta-1-Asn (GnM3F6). This Caenorhabditis elegans protein is Alpha-(1,3)-fucosyltransferase fut-6.